We begin with the raw amino-acid sequence, 445 residues long: Reticulon-4 receptor-like 1 (445 aa).

The signal sequence occupies residues Met-1 to Gly-24. The region spanning Cys-25–Glu-54 is the LRRNT domain. LRR repeat units lie at residues Asp-55–Pro-76, Ala-77–Gly-98, His-101–Gly-123, Lys-126–Gly-147, Ser-150–Asp-171, Asn-174–Gly-195, Asn-198–Asp-219, and Arg-222–Pro-243. An LRRCT domain is found at Asn-255 to Gly-306. Disordered stretches follow at residues Cys-304–Glu-380 and Arg-401–Gln-421. Composition is skewed to basic residues over residues Gly-352 to Arg-366 and Arg-401 to Pro-413. Residue Ser-424 is the site of GPI-anchor amidated serine attachment. Residues Ser-424–Leu-444 form a helical membrane-spanning segment. Positions Ser-425–Arg-445 are cleaved as a propeptide — removed in mature form.

The protein belongs to the Nogo receptor family. Identified in a complex that contains RTN4R, RTN4RL1 and NGFR; the interaction depends on the presence of chondroitin sulfate proteoglycans. Does not interact with MAG, OMG and RTN4. Detected in brain (at protein level). Expressed in various regions of the brain, including the cerebral cortex, hippocampus, striatum, thalamus and cerebellum.

Its subcellular location is the cell membrane. The protein resides in the membrane raft. It is found in the perikaryon. The protein localises to the cell projection. Functionally, cell surface receptor. Plays a functionally redundant role in postnatal brain development and in regulating axon regeneration in the adult central nervous system. Contributes to normal axon migration across the brain midline and normal formation of the corpus callosum. Protects motoneurons against apoptosis; protection against apoptosis is probably mediated by MAG. Plays a role in inhibiting neurite outgrowth and axon regeneration via its binding to neuronal chondroitin sulfate proteoglycans. Binds heparin. Like other family members, plays a role in restricting the number dendritic spines and the number of synapses that are formed during brain development. Signaling mediates activation of Rho and downstream reorganization of the actin cytoskeleton. The sequence is that of Reticulon-4 receptor-like 1 from Rattus norvegicus (Rat).